A 311-amino-acid polypeptide reads, in one-letter code: Phosphoribosylamine--glycine ligase (311 aa).

The ATP-grasp domain maps to 1 to 191 (DPRVRKQYIQ…LVQVLLAACR (191 aa)).

Belongs to the GARS family.

It localises to the plastid. Its subcellular location is the chloroplast. The catalysed reaction is 5-phospho-beta-D-ribosylamine + glycine + ATP = N(1)-(5-phospho-beta-D-ribosyl)glycinamide + ADP + phosphate + H(+). It functions in the pathway purine metabolism; IMP biosynthesis via de novo pathway; N(1)-(5-phospho-D-ribosyl)glycinamide from 5-phospho-alpha-D-ribose 1-diphosphate: step 2/2. The sequence is that of Phosphoribosylamine--glycine ligase (PUR2) from Vigna unguiculata (Cowpea).